We begin with the raw amino-acid sequence, 749 residues long: Myosin-binding protein 2 (749 aa).

Residues 17 to 37 (ITLILVYAFLEWSLIFFILLN) form a helical membrane-spanning segment. The disordered stretch occupies residues 164–184 (NLNDSQEETEEKKVPQSHEKL). Residues 173-184 (EEKKVPQSHEKL) show a composition bias toward basic and acidic residues. One can recognise a GTD-binding domain in the interval 411-509 (LTVDKLKFEL…ELEKELEVYR (99 aa)). The stretch at 589 to 621 (ERLSILGRLKFLEEKLTDLNNEEDDEEEAKTFE) forms a coiled coil. Residues 608–640 (NNEEDDEEEAKTFESNGSINGNEHIHGKETNGK) are disordered. The segment covering 630-639 (EHIHGKETNG) has biased composition (basic and acidic residues). Residues 676–710 (DSEKGENVTIEEEVDELYERLEALEADREFLRHCV) are a coiled coil.

As to quaternary structure, interacts with myosin XI-K and XI-1. Expressed in leaf epidermal cells, roots and root hairs.

It is found in the endomembrane system. In terms of biological role, membrane-anchored myosin receptors that define a distinct, plant-specific transport vesicle compartment. This Arabidopsis thaliana (Mouse-ear cress) protein is Myosin-binding protein 2.